Reading from the N-terminus, the 387-residue chain is Succinate--CoA ligase [ADP-forming] subunit beta (387 aa).

The ATP-grasp domain occupies 9-236 (KELFAKHNVP…RDATDPLELK (228 aa)). ATP is bound by residues K45, 52–54 (GRG), S94, and E99. Mg(2+)-binding residues include N191 and D205. Substrate-binding positions include N256 and 318–320 (GIT).

The protein belongs to the succinate/malate CoA ligase beta subunit family. In terms of assembly, heterotetramer of two alpha and two beta subunits. Mg(2+) is required as a cofactor.

The catalysed reaction is succinate + ATP + CoA = succinyl-CoA + ADP + phosphate. It catalyses the reaction GTP + succinate + CoA = succinyl-CoA + GDP + phosphate. It participates in carbohydrate metabolism; tricarboxylic acid cycle; succinate from succinyl-CoA (ligase route): step 1/1. Its function is as follows. Succinyl-CoA synthetase functions in the citric acid cycle (TCA), coupling the hydrolysis of succinyl-CoA to the synthesis of either ATP or GTP and thus represents the only step of substrate-level phosphorylation in the TCA. The beta subunit provides nucleotide specificity of the enzyme and binds the substrate succinate, while the binding sites for coenzyme A and phosphate are found in the alpha subunit. The protein is Succinate--CoA ligase [ADP-forming] subunit beta of Mycolicibacterium smegmatis (strain ATCC 700084 / mc(2)155) (Mycobacterium smegmatis).